Consider the following 105-residue polypeptide: MKVRKGDTVLVIAGKDKGAKGKVLKAYPDRERVLVEGVNRIKKHTAISTNQRGAQSGGIVTQEAPIHVSNVMVVDSDGKPARVGYRLDEETGKRVRISKRNGKDI.

The protein belongs to the universal ribosomal protein uL24 family. In terms of assembly, part of the 50S ribosomal subunit.

In terms of biological role, one of two assembly initiator proteins, it binds directly to the 5'-end of the 23S rRNA, where it nucleates assembly of the 50S subunit. Functionally, one of the proteins that surrounds the polypeptide exit tunnel on the outside of the subunit. The chain is Large ribosomal subunit protein uL24 from Mycobacterium avium (strain 104).